The sequence spans 716 residues: MALTAALKAQIAAWYKALQEQIPDFIPRAPQRQMIADVAKTLAGEEGRHLAIEAPTGVGKTLSYLIPGIAIAREEQKTLVVSTANVALQDQIYSKDLPLLKKIIPDLKFTAAFGRGRYVCPRNLTALASTEPTQQDLLAFLDDELTPNNQEEQKRCAKLKGDLDTYKWDGLRDHTDIAIDDDLWRRLSTDKASCLNRNCYYYRECPFFVTRREIQEAEVVVANHALVMAAMESEAVLPDPKNLLLVLDEGHHLPDVARDALEMSAEITVPWYRLQLDLFTKLVATCMEQFRPKTIPPLAIPERLNAHCEELYELIASLNNILNLYMPAGQEAEHRFAMGELPDELLEICQRLAKLTEMLRGLAELFLNDLSEKTGSHDIVRLHRLILQMNRALGMFEVQSKLWRLASLAQSSGAPVTKWATREEREGQLHLWFHCVGIRVSDQLERLLWRSIPHIIVTSATLRSLNSFSRLQEMSGLKEKAGDRFVALDSPFNHCEQGKIVIPRMRFEPSIDNEEQHIAEMAAFFREQVESKKYLGMLVLFASGRAMQRFLDYVTDLRLMLLVQGDQPRYRLVELHRKRVANGERSVLVGLQSFAEGLDLKGDLLSQVHIHKIAFPPIDSPVVITEGEWLKSLNRYPFEVQSLPSASFNLIQQVGRLIRSHGCWGEVVIYDKRLLTKNYGKRLLDALPVFPIEQPEVPEGIVKKKEKTKSPRRRRR.

The region spanning 17–294 (ALQEQIPDFI…TCMEQFRPKT (278 aa)) is the Helicase ATP-binding domain. 54–61 (APTGVGKT) contributes to the ATP binding site. Cysteine 120 contacts [4Fe-4S] cluster. The short motif at 131–134 (EPTQ) is the DEAH box element. 3 residues coordinate [4Fe-4S] cluster: cysteine 194, cysteine 199, and cysteine 205. Positions 248–251 (DEGH) match the DEAH box motif. A Helicase C-terminal domain is found at 487 to 698 (ALDSPFNHCE…VFPIEQPEVP (212 aa)).

The protein belongs to the helicase family. DinG subfamily. Type 1 sub-subfamily. Requires [4Fe-4S] cluster as cofactor.

The enzyme catalyses Couples ATP hydrolysis with the unwinding of duplex DNA at the replication fork by translocating in the 5'-3' direction. This creates two antiparallel DNA single strands (ssDNA). The leading ssDNA polymer is the template for DNA polymerase III holoenzyme which synthesizes a continuous strand.. It catalyses the reaction ATP + H2O = ADP + phosphate + H(+). DNA-dependent ATPase and 5'-3' DNA helicase. Unwinds D-loops, R-loops, forked DNA and G-quadruplex DNA. The chain is ATP-dependent DNA helicase DinG from Shigella flexneri.